Here is a 274-residue protein sequence, read N- to C-terminus: Ribosomal RNA small subunit methyltransferase A (274 aa).

6 residues coordinate S-adenosyl-L-methionine: H15, L17, G42, E64, D89, and N108.

The protein belongs to the class I-like SAM-binding methyltransferase superfamily. rRNA adenine N(6)-methyltransferase family. RsmA subfamily.

It is found in the cytoplasm. It carries out the reaction adenosine(1518)/adenosine(1519) in 16S rRNA + 4 S-adenosyl-L-methionine = N(6)-dimethyladenosine(1518)/N(6)-dimethyladenosine(1519) in 16S rRNA + 4 S-adenosyl-L-homocysteine + 4 H(+). Specifically dimethylates two adjacent adenosines (A1518 and A1519) in the loop of a conserved hairpin near the 3'-end of 16S rRNA in the 30S particle. May play a critical role in biogenesis of 30S subunits. The sequence is that of Ribosomal RNA small subunit methyltransferase A from Prochlorococcus marinus (strain MIT 9215).